A 535-amino-acid chain; its full sequence is tRNA-2-methylthio-N(6)-dimethylallyladenosine synthase (535 aa).

The MTTase N-terminal domain maps to 24 to 139; sequence RTYEVRTFGC…LPRLLERARH (116 aa). The [4Fe-4S] cluster site is built by Cys-33, Cys-68, Cys-102, Cys-176, Cys-180, and Cys-183. One can recognise a Radical SAM core domain in the interval 162-392; the sequence is RDSSFSGWVS…IALQERISLE (231 aa). One can recognise a TRAM domain in the interval 395–465; that stretch reads EKLIGRDVEL…PHYLIADAAG (71 aa). A disordered region spans residues 512-535; it reads RTREPLTSPGVGTMPLYDPTDGQR.

Belongs to the methylthiotransferase family. MiaB subfamily. Monomer. [4Fe-4S] cluster is required as a cofactor.

It localises to the cytoplasm. It carries out the reaction N(6)-dimethylallyladenosine(37) in tRNA + (sulfur carrier)-SH + AH2 + 2 S-adenosyl-L-methionine = 2-methylsulfanyl-N(6)-dimethylallyladenosine(37) in tRNA + (sulfur carrier)-H + 5'-deoxyadenosine + L-methionine + A + S-adenosyl-L-homocysteine + 2 H(+). In terms of biological role, catalyzes the methylthiolation of N6-(dimethylallyl)adenosine (i(6)A), leading to the formation of 2-methylthio-N6-(dimethylallyl)adenosine (ms(2)i(6)A) at position 37 in tRNAs that read codons beginning with uridine. This Leifsonia xyli subsp. xyli (strain CTCB07) protein is tRNA-2-methylthio-N(6)-dimethylallyladenosine synthase.